We begin with the raw amino-acid sequence, 250 residues long: Probable replication-associated protein repA2 (250 aa).

This sequence belongs to the IncFII RepA family.

Its function is as follows. This protein is essential for plasmid replication; it is involved in copy control functions. This is Probable replication-associated protein repA2 (repA2) from Buchnera aphidicola subsp. Schizaphis graminum (strain Sg).